The primary structure comprises 1456 residues: Macrophage mannose receptor 1 (1456 aa).

The first 19 residues, 1–19 (MRLLLLLAFISVIPVSVQL), serve as a signal peptide directing secretion. Residues 20 to 1388 (LDARQFLIYN…DPQPKGSSKA (1369 aa)) are Extracellular-facing. Residues 22-142 (ARQFLIYNED…SGLWSRWKVY (121 aa)) enclose the Ricin B-type lectin domain. 7 cysteine pairs are disulfide-bonded: cysteine 35–cysteine 49, cysteine 74–cysteine 91, cysteine 102–cysteine 149, cysteine 168–cysteine 194, cysteine 182–cysteine 209, cysteine 247–cysteine 340, and cysteine 316–cysteine 332. A glycan (N-linked (GlcNAc...) asparagine) is linked at asparagine 104. The 49-residue stretch at 163–211 (ANGAVCAFPFKFENKWYADCTSAGRSDGWLWCGTTTDYDKDKLFGFCPL) folds into the Fibronectin type-II domain. Positions 225 to 341 (LTGILYQINS…CVQKLGYICK (117 aa)) constitute a C-type lectin 1 domain. The N-linked (GlcNAc...) asparagine glycan is linked to asparagine 344. C-type lectin domains follow at residues 369-487 (YAGH…YICK), 511-626 (HGFY…FVCK), 655-778 (KTSM…WICQ), and 807-923 (YKDY…FICQ). Cystine bridges form between cysteine 391–cysteine 486 and cysteine 463–cysteine 478. N-linked (GlcNAc...) asparagine glycosylation occurs at asparagine 529. 6 disulfides stabilise this stretch: cysteine 532/cysteine 625, cysteine 600/cysteine 617, cysteine 680/cysteine 777, cysteine 753/cysteine 769, cysteine 828/cysteine 922, and cysteine 899/cysteine 914. Residues asparagine 926 and asparagine 930 are each glycosylated (N-linked (GlcNAc...) asparagine). C-type lectin domains are found at residues 951 to 1079 (YKNK…YICQ), 1101 to 1212 (YGKS…FLCK), and 1240 to 1355 (FYGH…FICK). Intrachain disulfides connect cysteine 976–cysteine 1078, cysteine 1051–cysteine 1070, cysteine 1122–cysteine 1211, cysteine 1189–cysteine 1203, cysteine 1262–cysteine 1354, and cysteine 1331–cysteine 1346. Residue asparagine 1159 is glycosylated (N-linked (GlcNAc...) asparagine). N-linked (GlcNAc...) asparagine glycosylation is present at asparagine 1204. A helical transmembrane segment spans residues 1389–1409 (AGVVTVVLLIVIGAGVAAYFF). Residues 1410–1456 (YKKRHALHIPQEATFENTLYFNSNLSPGTSDTKDLMGNIEQNEHAII) lie on the Cytoplasmic side of the membrane.

As to expression, detected in macrophages.

The protein localises to the endosome membrane. The protein resides in the cell membrane. In terms of biological role, mediates the endocytosis of glycoproteins by macrophages. Binds both sulfated and non-sulfated polysaccharide chains. Acts as phagocytic receptor for bacteria, fungi and other pathogens. The chain is Macrophage mannose receptor 1 (Mrc1) from Mus musculus (Mouse).